The sequence spans 214 residues: MQLFHLCLIISCTCPTFQASKLCLGWLWGMDIDPYKEFGATVELLSFLPSDFFPSVRDLXDTASALYREALESPEHCSPHHTALRQAILCWGKLMTLATWVGNNLEDPASRDLVVNYVNTNMGLKIRQLLWFHISCLTFGRETVLEYLVSFGVWIRTPPAYRPPNAPILSTLPETTVVRRRDRGRSPRRRTPSPRRRRSQSPRRRRSQSRESQC.

The N-terminal stretch at Met1 to Ala19 is a signal peptide. The HBEAG stretch occupies residues Gly25–Leu27. The segment at Asn165–Cys214 is disordered. Positions Val178 to Ser207 are enriched in basic residues. Residues Ser186–Pro192 form a 1; half-length repeat. The 3 X 8 AA repeats of S-P-R-R-R-R-S-Q stretch occupies residues Ser186–Gln208. Residues Ser186 to Cys214 constitute a propeptide that is removed on maturation. 2 tandem repeats follow at residues Ser193 to Gln200 and Ser201 to Gln208.

Belongs to the orthohepadnavirus precore antigen family. In terms of assembly, homodimerizes. Post-translationally, phosphorylated. In terms of processing, cleaved by host furin.

Its subcellular location is the secreted. It is found in the host nucleus. May regulate immune response to the intracellular capsid in acting as a T-cell tolerogen, by having an immunoregulatory effect which prevents destruction of infected cells by cytotoxic T-cells. This immune regulation may predispose to chronicity during perinatal infections and prevent severe liver injury during adult infections. This is External core antigen from Homo sapiens (Human).